Consider the following 786-residue polypeptide: Probable aminopeptidase 1 (786 aa).

Substrate-binding positions include Glu103 and 235–239; that span reads GAMEN. Position 270 (His270) interacts with Zn(2+). Residue Glu271 is the Proton acceptor of the active site. Residues His274 and Glu293 each coordinate Zn(2+).

Belongs to the peptidase M1 family. Zn(2+) is required as a cofactor.

The protein resides in the cytoplasm. This chain is Probable aminopeptidase 1 (ape1), found in Sulfurisphaera tokodaii (strain DSM 16993 / JCM 10545 / NBRC 100140 / 7) (Sulfolobus tokodaii).